The following is a 144-amino-acid chain: Deoxyuridine 5'-triphosphate nucleotidohydrolase (144 aa).

Residues 63–65, asparagine 76, and 80–82 contribute to the substrate site; these read RSG and TID.

It belongs to the dUTPase family. It depends on Mg(2+) as a cofactor.

The enzyme catalyses dUTP + H2O = dUMP + diphosphate + H(+). The protein operates within pyrimidine metabolism; dUMP biosynthesis; dUMP from dCTP (dUTP route): step 2/2. In terms of biological role, this enzyme is involved in nucleotide metabolism: it produces dUMP, the immediate precursor of thymidine nucleotides and it decreases the intracellular concentration of dUTP so that uracil cannot be incorporated into DNA. This Porphyromonas gingivalis (strain ATCC 33277 / DSM 20709 / CIP 103683 / JCM 12257 / NCTC 11834 / 2561) protein is Deoxyuridine 5'-triphosphate nucleotidohydrolase.